Consider the following 430-residue polypeptide: Adenylosuccinate synthetase (430 aa).

GTP is bound by residues 12 to 18 and 40 to 42; these read GDEGKGK and GHT. D13 (proton acceptor) is an active-site residue. Residues D13 and G40 each coordinate Mg(2+). IMP-binding positions include 13-16, 38-41, T130, R144, Q224, T239, and R303; these read DEGK and NAGH. H41 acts as the Proton donor in catalysis. 299 to 305 provides a ligand contact to substrate; the sequence is TVTGRKR. GTP is bound by residues R305, 331–333, and 413–415; these read KLD and STS.

It belongs to the adenylosuccinate synthetase family. Homodimer. Mg(2+) is required as a cofactor.

It is found in the cytoplasm. It carries out the reaction IMP + L-aspartate + GTP = N(6)-(1,2-dicarboxyethyl)-AMP + GDP + phosphate + 2 H(+). Its pathway is purine metabolism; AMP biosynthesis via de novo pathway; AMP from IMP: step 1/2. Functionally, plays an important role in the de novo pathway of purine nucleotide biosynthesis. Catalyzes the first committed step in the biosynthesis of AMP from IMP. In Cereibacter sphaeroides (strain ATCC 17023 / DSM 158 / JCM 6121 / CCUG 31486 / LMG 2827 / NBRC 12203 / NCIMB 8253 / ATH 2.4.1.) (Rhodobacter sphaeroides), this protein is Adenylosuccinate synthetase.